The sequence spans 53 residues: Large ribosomal subunit protein eL24 (53 aa).

Residues Cys-4, Cys-7, Cys-30, and Cys-34 each coordinate Zn(2+). A C4-type zinc finger spans residues 4 to 34 (CSFCHEEIEPGTGKMYVKRDGTIYFFCSSKC).

It belongs to the eukaryotic ribosomal protein eL24 family. Part of the 50S ribosomal subunit. Forms a cluster with proteins L3 and L14. Zn(2+) is required as a cofactor.

In terms of biological role, binds to the 23S rRNA. This is Large ribosomal subunit protein eL24 from Methanothermobacter thermautotrophicus (strain ATCC 29096 / DSM 1053 / JCM 10044 / NBRC 100330 / Delta H) (Methanobacterium thermoautotrophicum).